We begin with the raw amino-acid sequence, 566 residues long: Endoglucanase B (566 aa).

Positions 1–30 are cleaved as a signal peptide; sequence MKKRRSSKVILSLAIVVALLAAVEPNAALA. The active-site Proton donor is the E177. E299 (nucleophile) is an active-site residue.

This sequence belongs to the glycosyl hydrolase 5 (cellulase A) family.

The enzyme catalyses Endohydrolysis of (1-&gt;4)-beta-D-glucosidic linkages in cellulose, lichenin and cereal beta-D-glucans.. The sequence is that of Endoglucanase B (celB) from Paenibacillus lautus (Bacillus lautus).